Reading from the N-terminus, the 59-residue chain is Alpha-like toxin CsEv5 (59 aa).

Residues 1-59 form the LCN-type CS-alpha/beta domain; sequence KDGYPVDSKGCKLSCVANNYCDNQCKMKKASGGHCYAMSCYCEGLPENAKVSDSATNIC. 4 disulfide bridges follow: C11–C59, C15–C35, C21–C40, and C25–C42.

This sequence belongs to the long (4 C-C) scorpion toxin superfamily. Sodium channel inhibitor family. In terms of tissue distribution, expressed by the venom gland.

The protein resides in the secreted. In terms of biological role, binds voltage-independently sodium channels (Nav) and inhibits the inactivation of the activated channels, thereby blocking neuronal transmission. Is highly toxic to insects and barely toxic to mammals. As it does not compete with the classical alpha-toxin AaH2, this toxin is considered as an alpha-like toxin. The protein is Alpha-like toxin CsEv5 of Centruroides sculpturatus (Arizona bark scorpion).